A 313-amino-acid chain; its full sequence is Putative S-adenosyl-L-methionine-dependent methyltransferase MUL_0706 (313 aa).

S-adenosyl-L-methionine-binding positions include D132 and 161-162 (DL).

The protein belongs to the UPF0677 family.

Functionally, exhibits S-adenosyl-L-methionine-dependent methyltransferase activity. The sequence is that of Putative S-adenosyl-L-methionine-dependent methyltransferase MUL_0706 from Mycobacterium ulcerans (strain Agy99).